The sequence spans 218 residues: Phosphatidylserine decarboxylase proenzyme (218 aa).

Residue S187 is the Schiff-base intermediate with substrate; via pyruvic acid of the active site. The residue at position 187 (S187) is a Pyruvic acid (Ser); by autocatalysis.

Belongs to the phosphatidylserine decarboxylase family. PSD-A subfamily. As to quaternary structure, heterodimer of a large membrane-associated beta subunit and a small pyruvoyl-containing alpha subunit. It depends on pyruvate as a cofactor. Is synthesized initially as an inactive proenzyme. Formation of the active enzyme involves a self-maturation process in which the active site pyruvoyl group is generated from an internal serine residue via an autocatalytic post-translational modification. Two non-identical subunits are generated from the proenzyme in this reaction, and the pyruvate is formed at the N-terminus of the alpha chain, which is derived from the carboxyl end of the proenzyme. The post-translation cleavage follows an unusual pathway, termed non-hydrolytic serinolysis, in which the side chain hydroxyl group of the serine supplies its oxygen atom to form the C-terminus of the beta chain, while the remainder of the serine residue undergoes an oxidative deamination to produce ammonia and the pyruvoyl prosthetic group on the alpha chain.

The protein resides in the cell membrane. It catalyses the reaction a 1,2-diacyl-sn-glycero-3-phospho-L-serine + H(+) = a 1,2-diacyl-sn-glycero-3-phosphoethanolamine + CO2. It functions in the pathway phospholipid metabolism; phosphatidylethanolamine biosynthesis; phosphatidylethanolamine from CDP-diacylglycerol: step 2/2. Functionally, catalyzes the formation of phosphatidylethanolamine (PtdEtn) from phosphatidylserine (PtdSer). In Geobacter sulfurreducens (strain ATCC 51573 / DSM 12127 / PCA), this protein is Phosphatidylserine decarboxylase proenzyme.